A 220-amino-acid chain; its full sequence is Deoxyribose-phosphate aldolase (220 aa).

Asp92 (proton donor/acceptor) is an active-site residue. The Schiff-base intermediate with acetaldehyde role is filled by Lys155. Lys184 (proton donor/acceptor) is an active-site residue.

The protein belongs to the DeoC/FbaB aldolase family. DeoC type 1 subfamily.

The protein localises to the cytoplasm. It carries out the reaction 2-deoxy-D-ribose 5-phosphate = D-glyceraldehyde 3-phosphate + acetaldehyde. It participates in carbohydrate degradation; 2-deoxy-D-ribose 1-phosphate degradation; D-glyceraldehyde 3-phosphate and acetaldehyde from 2-deoxy-alpha-D-ribose 1-phosphate: step 2/2. Its function is as follows. Catalyzes a reversible aldol reaction between acetaldehyde and D-glyceraldehyde 3-phosphate to generate 2-deoxy-D-ribose 5-phosphate. This chain is Deoxyribose-phosphate aldolase, found in Natranaerobius thermophilus (strain ATCC BAA-1301 / DSM 18059 / JW/NM-WN-LF).